Reading from the N-terminus, the 241-residue chain is Probable transcriptional regulatory protein Neut_0281 (241 aa).

Belongs to the TACO1 family.

It localises to the cytoplasm. The polypeptide is Probable transcriptional regulatory protein Neut_0281 (Nitrosomonas eutropha (strain DSM 101675 / C91 / Nm57)).